Here is a 126-residue protein sequence, read N- to C-terminus: Histone H2B type 1-P (126 aa).

Positions 1 to 36 are disordered; that stretch reads MPEPVKSVPAPKKGSKKAVTKAQKKDGKKRKRSRKE. The residue at position 2 (Pro2) is an N-acetylproline. Residue Glu3 is modified to ADP-ribosyl glutamic acid. Residue Lys6 is modified to N6-(2-hydroxyisobutyryl)lysine; alternate. N6-(beta-hydroxybutyryl)lysine; alternate is present on Lys6. The residue at position 6 (Lys6) is an N6-acetyllysine; alternate. Lys6 is subject to N6-butyryllysine; alternate. Lys6 carries the N6-crotonyllysine; alternate modification. N6-lactoyllysine; alternate is present on Lys6. Residue Lys6 forms a Glycyl lysine isopeptide (Lys-Gly) (interchain with G-Cter in SUMO2); alternate linkage. An ADP-ribosylserine modification is found at Ser7. At Lys12 the chain carries N6-(beta-hydroxybutyryl)lysine; alternate. An N6-acetyllysine; alternate mark is found at Lys12 and Lys13. An N6-crotonyllysine; alternate mark is found at Lys12 and Lys13. An N6-lactoyllysine; alternate modification is found at Lys12. Lys13 bears the N6-(2-hydroxyisobutyryl)lysine; alternate mark. Residue Ser15 is modified to Phosphoserine; by STK4/MST1. An N6-acetyllysine; alternate mark is found at Lys16, Lys17, Lys21, and Lys24. N6-crotonyllysine; alternate is present on residues Lys16, Lys17, Lys21, and Lys24. Residues Lys16, Lys17, Lys21, and Lys24 each carry the N6-lactoyllysine; alternate modification. Lys17 carries the post-translational modification N6-glutaryllysine; alternate. 2 positions are modified to N6-(2-hydroxyisobutyryl)lysine; alternate: Lys21 and Lys24. Position 21 is an N6-(beta-hydroxybutyryl)lysine; alternate (Lys21). Lys21 is subject to N6-butyryllysine; alternate. Residue Lys21 forms a Glycyl lysine isopeptide (Lys-Gly) (interchain with G-Cter in SUMO2); alternate linkage. Position 25 is an N6-(2-hydroxyisobutyryl)lysine (Lys25). Position 35 is an N6-(2-hydroxyisobutyryl)lysine; alternate (Lys35). An N6-(beta-hydroxybutyryl)lysine; alternate modification is found at Lys35. The residue at position 35 (Lys35) is an N6-crotonyllysine; alternate. Position 35 is an N6-glutaryllysine; alternate (Lys35). An N6-succinyllysine; alternate modification is found at Lys35. Lys35 participates in a covalent cross-link: Glycyl lysine isopeptide (Lys-Gly) (interchain with G-Cter in ubiquitin); alternate. Glu36 carries the polyADP-ribosyl glutamic acid modification. Position 37 is a phosphoserine; by AMPK (Ser37). An N6-(2-hydroxyisobutyryl)lysine; alternate mark is found at Lys44, Lys47, and Lys58. An N6-lactoyllysine; alternate modification is found at Lys44. 2 positions are modified to N6-glutaryllysine; alternate: Lys44 and Lys47. Position 47 is an N6-methyllysine; alternate (Lys47). Lys58 is subject to N6,N6-dimethyllysine; alternate. Arg80 is modified (dimethylated arginine). Lys86 bears the N6-(2-hydroxyisobutyryl)lysine; alternate mark. Lys86 carries the N6-acetyllysine; alternate modification. Lys86 is modified (N6-lactoyllysine; alternate). Lys86 carries the N6,N6,N6-trimethyllysine; alternate modification. Omega-N-methylarginine occurs at positions 87 and 93. Lys109 carries the post-translational modification N6-(2-hydroxyisobutyryl)lysine; alternate. Residue Lys109 is modified to N6-(beta-hydroxybutyryl)lysine; alternate. Residue Lys109 is modified to N6-lactoyllysine; alternate. Lys109 is subject to N6-glutaryllysine; alternate. An N6-methyllysine; alternate modification is found at Lys109. O-linked (GlcNAc) serine glycosylation is present at Ser113. Thr116 is modified (phosphothreonine). 2 positions are modified to N6-(2-hydroxyisobutyryl)lysine; alternate: Lys117 and Lys121. Lys117 carries the post-translational modification N6-(beta-hydroxybutyryl)lysine; alternate. 2 positions are modified to N6-lactoyllysine; alternate: Lys117 and Lys121. 2 positions are modified to N6-glutaryllysine; alternate: Lys117 and Lys121. 2 positions are modified to N6-succinyllysine; alternate: Lys117 and Lys121. Lys117 is modified (N6-methylated lysine; alternate). Lys121 participates in a covalent cross-link: Glycyl lysine isopeptide (Lys-Gly) (interchain with G-Cter in ubiquitin); alternate.

This sequence belongs to the histone H2B family. The nucleosome is a histone octamer containing two molecules each of H2A, H2B, H3 and H4 assembled in one H3-H4 heterotetramer and two H2A-H2B heterodimers. The octamer wraps approximately 147 bp of DNA. In terms of processing, monoubiquitination at Lys-35 (H2BK34Ub) by the MSL1/MSL2 dimer is required for histone H3 'Lys-4' (H3K4me) and 'Lys-79' (H3K79me) methylation and transcription activation at specific gene loci, such as HOXA9 and MEIS1 loci. Similarly, monoubiquitination at Lys-121 (H2BK120Ub) by the RNF20/40 complex gives a specific tag for epigenetic transcriptional activation and is also prerequisite for histone H3 'Lys-4' and 'Lys-79' methylation. It also functions cooperatively with the FACT dimer to stimulate elongation by RNA polymerase II. H2BK120Ub also acts as a regulator of mRNA splicing: deubiquitination by USP49 is required for efficient cotranscriptional splicing of a large set of exons. Post-translationally, phosphorylated on Ser-15 (H2BS14ph) by STK4/MST1 during apoptosis; which facilitates apoptotic chromatin condensation. Also phosphorylated on Ser-15 in response to DNA double strand breaks (DSBs), and in correlation with somatic hypermutation and immunoglobulin class-switch recombination. Phosphorylation at Ser-37 (H2BS36ph) by AMPK in response to stress promotes transcription. GlcNAcylation at Ser-113 promotes monoubiquitination of Lys-121. It fluctuates in response to extracellular glucose, and associates with transcribed genes. In terms of processing, ADP-ribosylated by PARP1 or PARP2 on Ser-7 (H2BS6ADPr) in response to DNA damage. H2BS6ADPr promotes recruitment of CHD1L. Mono-ADP-ribosylated on Glu-3 (H2BE2ADPr) by PARP3 in response to single-strand breaks. Poly ADP-ribosylation on Glu-36 (H2BE35ADPr) by PARP1 regulates adipogenesis: it inhibits phosphorylation at Ser-37 (H2BS36ph), thereby blocking expression of pro-adipogenetic genes. Post-translationally, crotonylation (Kcr) is specifically present in male germ cells and marks testis-specific genes in post-meiotic cells, including X-linked genes that escape sex chromosome inactivation in haploid cells. Crotonylation marks active promoters and enhancers and confers resistance to transcriptional repressors. It is also associated with post-meiotically activated genes on autosomes. Hydroxybutyrylation of histones is induced by starvation. In terms of processing, lactylated in macrophages by EP300/P300 by using lactoyl-CoA directly derived from endogenous or exogenous lactate, leading to stimulates gene transcription.

Its subcellular location is the nucleus. It is found in the chromosome. Its function is as follows. Core component of nucleosome. Nucleosomes wrap and compact DNA into chromatin, limiting DNA accessibility to the cellular machineries which require DNA as a template. Histones thereby play a central role in transcription regulation, DNA repair, DNA replication and chromosomal stability. DNA accessibility is regulated via a complex set of post-translational modifications of histones, also called histone code, and nucleosome remodeling. In Mus musculus (Mouse), this protein is Histone H2B type 1-P (Hist1h2bp).